We begin with the raw amino-acid sequence, 138 residues long: Large ribosomal subunit protein uL16 (138 aa).

A compositionally biased stretch (basic residues) spans 1-13; the sequence is MLQPKRRKYRKEQ. Residues 1 to 24 form a disordered region; it reads MLQPKRRKYRKEQKGRNTGKATRG.

Belongs to the universal ribosomal protein uL16 family. As to quaternary structure, part of the 50S ribosomal subunit.

Functionally, binds 23S rRNA and is also seen to make contacts with the A and possibly P site tRNAs. This chain is Large ribosomal subunit protein uL16, found in Burkholderia ambifaria (strain ATCC BAA-244 / DSM 16087 / CCUG 44356 / LMG 19182 / AMMD) (Burkholderia cepacia (strain AMMD)).